The primary structure comprises 150 residues: PTS system galactitol-specific EIIA component (150 aa).

One can recognise a PTS EIIA type-2 domain in the interval 1–144; it reads MTNLFVRSGI…TQLKEYFTKY (144 aa). The Tele-phosphohistidine intermediate role is filled by H62. H62 is subject to Phosphohistidine; by HPr.

Forms a complex with one each of subunit of GatA, GatB and 2 subunits of GatC.

It is found in the cytoplasm. Functionally, the phosphoenolpyruvate-dependent sugar phosphotransferase system (sugar PTS), a major carbohydrate active transport system, catalyzes the phosphorylation of incoming sugar substrates concomitantly with their translocation across the cell membrane. The enzyme II complex composed of GatA, GatB and GatC is involved in galactitol transport. The polypeptide is PTS system galactitol-specific EIIA component (gatA) (Escherichia coli O157:H7).